The sequence spans 343 residues: Protein RecA (343 aa).

64–71 lines the ATP pocket; sequence GPESSGKT.

Belongs to the RecA family.

Its subcellular location is the cytoplasm. In terms of biological role, can catalyze the hydrolysis of ATP in the presence of single-stranded DNA, the ATP-dependent uptake of single-stranded DNA by duplex DNA, and the ATP-dependent hybridization of homologous single-stranded DNAs. It interacts with LexA causing its activation and leading to its autocatalytic cleavage. This Bacillus cereus (strain B4264) protein is Protein RecA.